The primary structure comprises 495 residues: Calcium-dependent protein kinase 11 (495 aa).

Residues 26-284 (YLLGKKLGQG…AHEALCHPWI (259 aa)) form the Protein kinase domain. ATP-binding positions include 32–40 (LGQGQFGTT) and Lys-55. Catalysis depends on Asp-150, which acts as the Proton acceptor. Ser-190 carries the phosphoserine modification. The segment at 290 to 320 (APDKPLDPAVLSRLKQFSQMNKIKKMALRVI) is autoinhibitory domain. EF-hand domains follow at residues 327–362 (EEIGGLKELFKMIDTDNSGTITFEELKAGLKRVGSE), 363–398 (LMESEIKSLMDAADIDNSGTIDYGEFLAATLHMNKM), 399–434 (EREENLVAAFSYFDKDGSGYITIDELQSACTEFGLC), and 438–468 (LDDMIKEIDLDNDGKIDFSEFTAMMRKGDGV). Ca(2+) is bound by residues Asp-340, Asp-342, Ser-344, Thr-346, Glu-351, Asp-376, Asp-378, Ser-380, Thr-382, Glu-387, Asp-412, Asp-414, Ser-416, Tyr-418, Glu-423, Asp-446, Asp-448, Asp-450, Lys-452, and Glu-457.

The protein belongs to the protein kinase superfamily. Ser/Thr protein kinase family. CDPK subfamily. As to quaternary structure, interacts with Di19.

It is found in the cytoplasm. The protein resides in the nucleus. The catalysed reaction is L-seryl-[protein] + ATP = O-phospho-L-seryl-[protein] + ADP + H(+). It catalyses the reaction L-threonyl-[protein] + ATP = O-phospho-L-threonyl-[protein] + ADP + H(+). With respect to regulation, activated by calcium. Autophosphorylation may play an important role in the regulation of the kinase activity. In terms of biological role, may play a role in signal transduction pathways that involve calcium as a second messenger. Functions as a regulator of the calcium-mediated abscisic acid (ABA) signaling pathway. Phosphorylates ABA-responsive transcription factors ABF1 and ABF4 in vitro. This is Calcium-dependent protein kinase 11 (CPK11) from Arabidopsis thaliana (Mouse-ear cress).